A 304-amino-acid chain; its full sequence is Granaticin polyketide synthase bifunctional cyclase/dehydratase (304 aa).

It participates in antifungal biosynthesis; monensin biosynthesis. Is needed for correct cyclization of the oligoketide leading to isochromanequinone formation. This chain is Granaticin polyketide synthase bifunctional cyclase/dehydratase, found in Streptomyces virginiae (Streptomyces cinnamonensis).